The sequence spans 477 residues: UDP-N-acetylmuramate--L-alanine ligase (477 aa).

122 to 128 is an ATP binding site; it reads GTHGKTT.

It belongs to the MurCDEF family.

The protein localises to the cytoplasm. It carries out the reaction UDP-N-acetyl-alpha-D-muramate + L-alanine + ATP = UDP-N-acetyl-alpha-D-muramoyl-L-alanine + ADP + phosphate + H(+). It functions in the pathway cell wall biogenesis; peptidoglycan biosynthesis. In terms of biological role, cell wall formation. The protein is UDP-N-acetylmuramate--L-alanine ligase of Xylella fastidiosa (strain M12).